We begin with the raw amino-acid sequence, 105 residues long: Large ribosomal subunit protein bL21 (105 aa).

Belongs to the bacterial ribosomal protein bL21 family. As to quaternary structure, part of the 50S ribosomal subunit. Contacts protein L20.

Its function is as follows. This protein binds to 23S rRNA in the presence of protein L20. This is Large ribosomal subunit protein bL21 from Dictyoglomus thermophilum (strain ATCC 35947 / DSM 3960 / H-6-12).